We begin with the raw amino-acid sequence, 360 residues long: D-alanine--D-alanine ligase (360 aa).

Positions 146 to 352 (KLCVADAGIA…FPELAERLLQ (207 aa)) constitute an ATP-grasp domain. Residue 179 to 234 (EEKFIYPFFVKPANLGSSIGISKVHHREQLPAALKSACSLDSKIVVEKAITGREIE) participates in ATP binding. Mg(2+)-binding residues include D305, E319, and N321.

Belongs to the D-alanine--D-alanine ligase family. Requires Mg(2+) as cofactor. Mn(2+) serves as cofactor.

It is found in the cytoplasm. The enzyme catalyses 2 D-alanine + ATP = D-alanyl-D-alanine + ADP + phosphate + H(+). Its pathway is cell wall biogenesis; peptidoglycan biosynthesis. Cell wall formation. The chain is D-alanine--D-alanine ligase from Pelodictyon phaeoclathratiforme (strain DSM 5477 / BU-1).